Consider the following 122-residue polypeptide: uncharacterized protein (122 aa).

Polar residues predominate over residues 79-90 (NERVTSRVTNSR). The tract at residues 79-122 (NERVTSRVTNSRTESESNGNGNATGNTSSNANSNGNANGIYIRK) is disordered. Over residues 94–122 (ESNGNGNATGNTSSNANSNGNANGIYIRK) the composition is skewed to low complexity.

This is an uncharacterized protein from Leptolyngbya boryana (Plectonema boryanum).